The following is a 261-amino-acid chain: Pantothenate synthetase (261 aa).

29–36 provides a ligand contact to ATP; that stretch reads MGALHNGH. H36 serves as the catalytic Proton donor. Q60 is a binding site for (R)-pantoate. Q60 lines the beta-alanine pocket. 147–150 serves as a coordination point for ATP; it reads GEKD. Q153 contributes to the (R)-pantoate binding site. 184–187 contributes to the ATP binding site; the sequence is LSSR.

It belongs to the pantothenate synthetase family. As to quaternary structure, homodimer.

The protein resides in the cytoplasm. It carries out the reaction (R)-pantoate + beta-alanine + ATP = (R)-pantothenate + AMP + diphosphate + H(+). It functions in the pathway cofactor biosynthesis; (R)-pantothenate biosynthesis; (R)-pantothenate from (R)-pantoate and beta-alanine: step 1/1. Catalyzes the condensation of pantoate with beta-alanine in an ATP-dependent reaction via a pantoyl-adenylate intermediate. This is Pantothenate synthetase from Francisella tularensis subsp. tularensis (strain FSC 198).